A 203-amino-acid chain; its full sequence is MLKIIDLGKTEYQEALEIQNRIFERKLTGEDQDNYFFITEHHPVYTAGKTTKPEHILNTEDIPVYYIDRGGSVTFHGEGQIVVYPVLSLKNRISVKRYVFTLEEIVIKTVKEIGINAYRKDRLRGVFTDKGKIASVGVKVSKGVTKHGISLNVNIEKRYFRRIIPCGIWDIPVCNITDFVEADIDKIKLKLIKHIIKEGRKLV.

The region spanning 30 to 203 is the BPL/LPL catalytic domain; the sequence is EDQDNYFFIT…HIIKEGRKLV (174 aa). Residues 69 to 76, 135 to 137, and 148 to 150 contribute to the substrate site; these read RGGSVTFH, SVG, and GIS. C166 functions as the Acyl-thioester intermediate in the catalytic mechanism.

It belongs to the LipB family.

It is found in the cytoplasm. The catalysed reaction is octanoyl-[ACP] + L-lysyl-[protein] = N(6)-octanoyl-L-lysyl-[protein] + holo-[ACP] + H(+). The protein operates within protein modification; protein lipoylation via endogenous pathway; protein N(6)-(lipoyl)lysine from octanoyl-[acyl-carrier-protein]: step 1/2. In terms of biological role, catalyzes the transfer of endogenously produced octanoic acid from octanoyl-acyl-carrier-protein onto the lipoyl domains of lipoate-dependent enzymes. Lipoyl-ACP can also act as a substrate although octanoyl-ACP is likely to be the physiological substrate. In Persephonella marina (strain DSM 14350 / EX-H1), this protein is Octanoyltransferase.